The primary structure comprises 607 residues: MDRSKDARKRSISLACTVCRKRKLKCDGNKPCGRCIRLNTPKECIYNIDKRKDKRKIKNGSKVFLFKNNTIDNGNNSILENKGLNEDLSSHIYEKEAPKFDSDIDISRFGTNDAVIFNNDGWDTSLPIDFDFDEFNTETTDFDDFLKLLGDNSPSKEQKSLSYSPTATGLSGVVKETESEDNAPTRSRLIDVLFENKLHSVPGISKWHLYELESQYPNLECTEGNSDEKFLLSTVLCLGSLTIRKRELLNHSNIDNRPLLPENSISKLTTDAFKYYNAAKTLVPDLLSHPTIDGFCGLVLMANFMTMMISLEHQLYLSINALQLAVALNLNNNTKCKELLESNSDGIGVILLFWNIWCSSCMLATIHGKNPFITLEQITTPLPCEISPRNKTNKLLIDFMQIRIKLATLQSKIFQRLYTSSTANEVPFVNLEREFEEVSLQITRLKGFPIFEEHLFYRSRVLMLELSCLRAQASFLLYRPYLITGESLQAVTMAKSIIHEIWSQYTKQFPDNEKERHERLDWNFCYPLRTASLTLCISCIILLRYKQVVQFLKGTELFEYILALEILQDLVQVLPIEQNLIDIIKYPISPVQLSGDSFVEFWGRILY.

Positions 16-44 form a DNA-binding region, zn(2)-C6 fungal-type; it reads CTVCRKRKLKCDGNKPCGRCIRLNTPKEC.

The protein localises to the nucleus. This is an uncharacterized protein from Saccharomyces cerevisiae (strain ATCC 204508 / S288c) (Baker's yeast).